The following is a 231-amino-acid chain: Endonuclease NucS (231 aa).

The protein belongs to the NucS endonuclease family.

The protein resides in the cytoplasm. Its function is as follows. Cleaves both 3' and 5' ssDNA extremities of branched DNA structures. In Pseudarthrobacter chlorophenolicus (strain ATCC 700700 / DSM 12829 / CIP 107037 / JCM 12360 / KCTC 9906 / NCIMB 13794 / A6) (Arthrobacter chlorophenolicus), this protein is Endonuclease NucS.